The following is a 271-amino-acid chain: Phosphate import ATP-binding protein PstB 2 (271 aa).

An ABC transporter domain is found at 25 to 266 (MATEDLHVYY…PQQKQTEDYI (242 aa)). 57–64 (GPSGCGKS) is a binding site for ATP.

This sequence belongs to the ABC transporter superfamily. Phosphate importer (TC 3.A.1.7) family. In terms of assembly, the complex is composed of two ATP-binding proteins (PstB), two transmembrane proteins (PstC and PstA) and a solute-binding protein (PstS).

Its subcellular location is the cell membrane. The catalysed reaction is phosphate(out) + ATP + H2O = ADP + 2 phosphate(in) + H(+). Its function is as follows. Part of the ABC transporter complex PstSACB involved in phosphate import. Responsible for energy coupling to the transport system. In Listeria monocytogenes serotype 4b (strain F2365), this protein is Phosphate import ATP-binding protein PstB 2.